A 107-amino-acid polypeptide reads, in one-letter code: CLAVATA3/ESR (CLE)-related protein 10 (107 aa).

Residues 1 to 23 (MKTNRNRPINILIVFFLLTTARA) form the signal peptide. Residues Asn-27 and Asn-30 are each glycosylated (N-linked (GlcNAc...) asparagine). A disordered region spans residues 73 to 107 (SRQPLFSPPPPPTEIDQRYGVEKRLVPSGPNPLHN). The segment covering 87–97 (IDQRYGVEKRL) has biased composition (basic and acidic residues). 2 positions are modified to hydroxyproline: Pro-99 and Pro-102. Residue Pro-102 is glycosylated (O-linked (Ara...) hydroxyproline).

This sequence belongs to the CLV3/ESR signal peptide family. The O-glycosylation (arabinosylation) of the hydroxyproline Pro-102 enhances binding affinity of the CLE10p peptide for its receptor. In terms of tissue distribution, expressed in stems, apex, leaves, flowers, siliques and pollen.

Its subcellular location is the secreted. It localises to the extracellular space. In terms of biological role, extracellular signal peptide that regulates cell fate. Represses root apical meristem maintenance. Regulates the transition of protophloem cells from proliferation to differentiation, thus impinging on postembryonic growth capacity of the root meristem; this signaling pathway requires CRN and CLV2. This Arabidopsis thaliana (Mouse-ear cress) protein is CLAVATA3/ESR (CLE)-related protein 10.